Reading from the N-terminus, the 313-residue chain is Ribosomal protein uL3 glutamine methyltransferase (313 aa).

It belongs to the protein N5-glutamine methyltransferase family. PrmB subfamily.

It catalyses the reaction L-glutaminyl-[ribosomal protein uL3] + S-adenosyl-L-methionine = N(5)-methyl-L-glutaminyl-[ribosomal protein uL3] + S-adenosyl-L-homocysteine + H(+). Functionally, methylates large ribosomal subunit protein uL3 on a specific glutamine residue. This Pasteurella multocida (strain Pm70) protein is Ribosomal protein uL3 glutamine methyltransferase.